The sequence spans 284 residues: Bifunctional protein FolD 2 (284 aa).

Residues 166–168 (GAS) and Ile232 each bind NADP(+).

Belongs to the tetrahydrofolate dehydrogenase/cyclohydrolase family. As to quaternary structure, homodimer.

It carries out the reaction (6R)-5,10-methylene-5,6,7,8-tetrahydrofolate + NADP(+) = (6R)-5,10-methenyltetrahydrofolate + NADPH. It catalyses the reaction (6R)-5,10-methenyltetrahydrofolate + H2O = (6R)-10-formyltetrahydrofolate + H(+). It participates in one-carbon metabolism; tetrahydrofolate interconversion. Its function is as follows. Catalyzes the oxidation of 5,10-methylenetetrahydrofolate to 5,10-methenyltetrahydrofolate and then the hydrolysis of 5,10-methenyltetrahydrofolate to 10-formyltetrahydrofolate. The protein is Bifunctional protein FolD 2 of Colwellia psychrerythraea (strain 34H / ATCC BAA-681) (Vibrio psychroerythus).